The following is a 106-amino-acid chain: uncharacterized protein (106 aa).

3 helical membrane-spanning segments follow: residues 4 to 24 (LPVVIISIVLFFVLFFGIGFL), 27 to 47 (MLLRMSWIMAVIYPIVCLFII), and 78 to 98 (VLILVSGLAGAIVSGIAINML).

Its subcellular location is the cell membrane. This is an uncharacterized protein from Bacillus subtilis (strain 168).